The sequence spans 28 residues: NU-theraphotoxin-Preg1a (28 aa).

3 disulfide bridges follow: Cys2–Cys19, Cys9–Cys22, and Cys18–Cys27.

In terms of tissue distribution, expressed by the venom gland.

It localises to the secreted. Functionally, toxin that acts as an agonist on melanocortin receptors (MC1R, MC3R, MC5R, MC5R). After binding to MC1R, the peptide activates the hMC1R/Gs pathway, but after binding to MC4R, it is not able to activate or antagonize the MC4R/Gs pathway. Inhibits melanocyte stimulating hormone (MSH)-binding to human receptors (Ki=1.8 uM to MC1R, Ki=19.8 uM to MC3R, Ki=7.1 uM to MC4R, Ki=10.0 uM to MC5R). This toxin is structurally unrelated to the natural agonists. The chain is NU-theraphotoxin-Preg1a from Poecilotheria regalis (Indian ornamental tree spider).